Reading from the N-terminus, the 387-residue chain is Bifunctional chorismate mutase/prephenate dehydratase (387 aa).

Positions 1 to 92 (MNPDNPLLAL…DSVLTQQALL (92 aa)) constitute a Chorismate mutase domain. The substrate site is built by R11, R28, K39, D48, E52, S84, and Q88. Residues 105-285 (RIAFLGPKGS…NHTRFIVLAR (181 aa)) form the Prephenate dehydratase domain. An ACT domain is found at 299 to 376 (TLIMATGQQA…RSLKVLGCYP (78 aa)).

Its subcellular location is the cytoplasm. The catalysed reaction is chorismate = prephenate. It catalyses the reaction prephenate + H(+) = 3-phenylpyruvate + CO2 + H2O. It participates in amino-acid biosynthesis; L-phenylalanine biosynthesis; phenylpyruvate from prephenate: step 1/1. The protein operates within metabolic intermediate biosynthesis; prephenate biosynthesis; prephenate from chorismate: step 1/1. Functionally, catalyzes the Claisen rearrangement of chorismate to prephenate and the decarboxylation/dehydration of prephenate to phenylpyruvate. The chain is Bifunctional chorismate mutase/prephenate dehydratase (pheA) from Enterobacter agglomerans (Erwinia herbicola).